A 218-amino-acid polypeptide reads, in one-letter code: Peptide methionine sulfoxide reductase MsrA (218 aa).

Residues 1–28 (MSFLDSYRKKTQMPSTDEALPGRAQPIP) are disordered. Cys57 is a catalytic residue.

This sequence belongs to the MsrA Met sulfoxide reductase family.

The enzyme catalyses L-methionyl-[protein] + [thioredoxin]-disulfide + H2O = L-methionyl-(S)-S-oxide-[protein] + [thioredoxin]-dithiol. It carries out the reaction [thioredoxin]-disulfide + L-methionine + H2O = L-methionine (S)-S-oxide + [thioredoxin]-dithiol. Its function is as follows. Has an important function as a repair enzyme for proteins that have been inactivated by oxidation. Catalyzes the reversible oxidation-reduction of methionine sulfoxide in proteins to methionine. This is Peptide methionine sulfoxide reductase MsrA from Brucella anthropi (strain ATCC 49188 / DSM 6882 / CCUG 24695 / JCM 21032 / LMG 3331 / NBRC 15819 / NCTC 12168 / Alc 37) (Ochrobactrum anthropi).